The chain runs to 258 residues: Glucanase inhibitor protein 1 (258 aa).

Residues 1–19 form the signal peptide; that stretch reads MRVVPTLAAASLALGAVAG. The Peptidase S1 domain maps to 27-254; it reads ILGGGEVPIG…AIEWITSVTK (228 aa). C54 and C70 are oxidised to a cystine. Residues N87, N102, N107, N157, and N185 are each glycosylated (N-linked (GlcNAc...) asparagine). Cystine bridges form between C177–C189 and C199–C230.

Belongs to the peptidase S1 family. As to quaternary structure, forms an apoplastic complex with host endoglucanases in tomato leaves during P.infestans infection.

The protein resides in the secreted. Functionally, secreted effector that suppresses host plant glucan elicitor-mediated defense responses. Targets host endoglucanases and inhibits the endoglucanase-mediated release of elicitor-active glucan oligosaccharides from P.infestans cell walls. The chain is Glucanase inhibitor protein 1 from Phytophthora infestans (Potato late blight agent).